A 512-amino-acid chain; its full sequence is 2-isopropylmalate synthase (512 aa).

Residues 4–266 enclose the Pyruvate carboxyltransferase domain; it reads IEIFDTTLRD…TTKLNLKEIA (263 aa). Mn(2+) contacts are provided by Asp13, His201, His203, and Asn237. A regulatory domain region spans residues 390–512; the sequence is QLESVQLAYG…GEPTPVSATI (123 aa).

This sequence belongs to the alpha-IPM synthase/homocitrate synthase family. LeuA type 1 subfamily. As to quaternary structure, homodimer. The cofactor is Mn(2+).

It is found in the cytoplasm. The enzyme catalyses 3-methyl-2-oxobutanoate + acetyl-CoA + H2O = (2S)-2-isopropylmalate + CoA + H(+). It functions in the pathway amino-acid biosynthesis; L-leucine biosynthesis; L-leucine from 3-methyl-2-oxobutanoate: step 1/4. In terms of biological role, catalyzes the condensation of the acetyl group of acetyl-CoA with 3-methyl-2-oxobutanoate (2-ketoisovalerate) to form 3-carboxy-3-hydroxy-4-methylpentanoate (2-isopropylmalate). This is 2-isopropylmalate synthase from Brevibacillus brevis (strain 47 / JCM 6285 / NBRC 100599).